Here is a 176-residue protein sequence, read N- to C-terminus: MTLFFASMAYASGDSGHGPDWGNFAFRVVNFVIFAGIIWKAAGKKIVGFFTGRRQGIEQELNDLETRKTEAKKQLAEVERRIANLESERQAILADYRAQGENIKAAIIDKAEKSASLITEQAKRTADNEIKAAIDAMRAQMADEIIVAAEKLLAEKLTANEHEKLIDKYLTKVVLN.

Residues 24-43 form a helical membrane-spanning segment; it reads FAFRVVNFVIFAGIIWKAAG.

It belongs to the ATPase B chain family. In terms of assembly, F-type ATPases have 2 components, F(1) - the catalytic core - and F(0) - the membrane proton channel. F(1) has five subunits: alpha(3), beta(3), gamma(1), delta(1), epsilon(1). F(0) has three main subunits: a(1), b(2) and c(10-14). The alpha and beta chains form an alternating ring which encloses part of the gamma chain. F(1) is attached to F(0) by a central stalk formed by the gamma and epsilon chains, while a peripheral stalk is formed by the delta and b chains.

It localises to the cell inner membrane. F(1)F(0) ATP synthase produces ATP from ADP in the presence of a proton or sodium gradient. F-type ATPases consist of two structural domains, F(1) containing the extramembraneous catalytic core and F(0) containing the membrane proton channel, linked together by a central stalk and a peripheral stalk. During catalysis, ATP synthesis in the catalytic domain of F(1) is coupled via a rotary mechanism of the central stalk subunits to proton translocation. Its function is as follows. Component of the F(0) channel, it forms part of the peripheral stalk, linking F(1) to F(0). The sequence is that of ATP synthase subunit b from Nitratidesulfovibrio vulgaris (strain ATCC 29579 / DSM 644 / CCUG 34227 / NCIMB 8303 / VKM B-1760 / Hildenborough) (Desulfovibrio vulgaris).